We begin with the raw amino-acid sequence, 417 residues long: Serine hydroxymethyltransferase (417 aa).

Residues Leu-121 and Gly-125–Leu-127 contribute to the (6S)-5,6,7,8-tetrahydrofolate site. Residue Lys-229 is modified to N6-(pyridoxal phosphate)lysine. Ser-355–Phe-357 serves as a coordination point for (6S)-5,6,7,8-tetrahydrofolate.

The protein belongs to the SHMT family. In terms of assembly, homodimer. It depends on pyridoxal 5'-phosphate as a cofactor.

Its subcellular location is the cytoplasm. The catalysed reaction is (6R)-5,10-methylene-5,6,7,8-tetrahydrofolate + glycine + H2O = (6S)-5,6,7,8-tetrahydrofolate + L-serine. It participates in one-carbon metabolism; tetrahydrofolate interconversion. It functions in the pathway amino-acid biosynthesis; glycine biosynthesis; glycine from L-serine: step 1/1. Functionally, catalyzes the reversible interconversion of serine and glycine with tetrahydrofolate (THF) serving as the one-carbon carrier. This reaction serves as the major source of one-carbon groups required for the biosynthesis of purines, thymidylate, methionine, and other important biomolecules. Also exhibits THF-independent aldolase activity toward beta-hydroxyamino acids, producing glycine and aldehydes, via a retro-aldol mechanism. This Klebsiella pneumoniae (strain 342) protein is Serine hydroxymethyltransferase.